Reading from the N-terminus, the 557-residue chain is Polypyrimidine tract-binding protein 1 (557 aa).

Met1 carries the post-translational modification N-acetylmethionine. Ser16 is modified (phosphoserine). 3 consecutive RRM domains span residues 59 to 143 (RVIH…SSPN), 184 to 260 (LRII…FSKL), and 363 to 437 (SVLL…LSKH). Lys65 participates in a covalent cross-link: Glycyl lysine isopeptide (Lys-Gly) (interchain with G-Cter in SUMO2). Tyr127 is modified (phosphotyrosine). Thr138 is modified (phosphothreonine). Residue Ser141 is modified to Phosphoserine. Lys218 participates in a covalent cross-link: Glycyl lysine isopeptide (Lys-Gly) (interchain with G-Cter in SUMO2). The residue at position 459 (Ser459) is a Phosphoserine. Residues 480–555 (ATLHLSNIPP…HHLRVSFSKS (76 aa)) form the RRM 4 domain.

In terms of assembly, monomer. Part of a ternary complex containing KHSRP, PTBP1, PTBP2 and HNRPH1. Interacts with RAVER1 and SFPQ.

Its subcellular location is the nucleus. Its function is as follows. Plays a role in pre-mRNA splicing and in the regulation of alternative splicing events. Activates exon skipping of its own pre-mRNA during muscle cell differentiation. Binds to the polypyrimidine tract of introns. May promote RNA looping when bound to two separate polypyrimidine tracts in the same pre-mRNA. May promote the binding of U2 snRNP to pre-mRNA. Cooperates with RAVER1 to modulate switching between mutually exclusive exons during maturation of the TPM1 pre-mRNA. Represses the splicing of MAPT/Tau exon 10. Binds to polypyrimidine-rich controlling element (PCE) of CFTR and promotes exon skipping of CFTR exon 9, thereby antagonizing TIA1 and its role in exon inclusion of CFTR exon 9. Plays a role in the splicing of pyruvate kinase PKM by binding repressively to a polypyrimidine tract flanking PKM exon 9, inhibiting exon 9 inclusion and resulting in exon 10 inclusion and production of the PKM M2 isoform. This chain is Polypyrimidine tract-binding protein 1 (PTBP1), found in Sus scrofa (Pig).